A 117-amino-acid chain; its full sequence is UPF0127 protein PYRAB11210 (117 aa).

Belongs to the UPF0127 family.

This Pyrococcus abyssi (strain GE5 / Orsay) protein is UPF0127 protein PYRAB11210.